The primary structure comprises 420 residues: MSNVRYISNLTRETYALILAGGRGSRLHELTDWRAKPALYFGGKFRIIDFPLSNCINSGIRRVGVVTQYKSHSLIRHVMRGWGHFKKELGESVEILPASQRYSENWYQGTADAVFQNIDIIRHELPKYVMVLSGDHVYRMDYAGLLAAHAESGADMTVSCLEVPVAEAAGAFGVMEVDDDMRILGFEEKPQLPKHCPGNPEKCLASMGNYVFNTEFLFEQLKKDAQNAESDRDFGKDIIPSIIEKHKVFAYPFKSAFPNEQAYWRDVGTLDSFWLANMELLSPTPALNLYDAKWPIWTYQEQLPPAKFVFDDDDRRGMAVDSIISGGCIISGATVRRSVLFNEVRVCSYSVVEDSVVLPDVVVLRHCKIKNAIIDRGCIIPEGTVIGYNHDHDRAKGFRVSEKGITLVTRDMLGLPVGYE.

Residues Tyr-107, Gly-173, 188–189 (EK), and Ser-206 contribute to the alpha-D-glucose 1-phosphate site.

It belongs to the bacterial/plant glucose-1-phosphate adenylyltransferase family. As to quaternary structure, homotetramer.

The catalysed reaction is alpha-D-glucose 1-phosphate + ATP + H(+) = ADP-alpha-D-glucose + diphosphate. It participates in glycan biosynthesis; glycogen biosynthesis. Functionally, involved in the biosynthesis of ADP-glucose, a building block required for the elongation reactions to produce glycogen. Catalyzes the reaction between ATP and alpha-D-glucose 1-phosphate (G1P) to produce pyrophosphate and ADP-Glc. In Shewanella oneidensis (strain ATCC 700550 / JCM 31522 / CIP 106686 / LMG 19005 / NCIMB 14063 / MR-1), this protein is Glucose-1-phosphate adenylyltransferase.